Here is a 221-residue protein sequence, read N- to C-terminus: Elongation factor Ts (221 aa).

Positions 82–85 are involved in Mg(2+) ion dislocation from EF-Tu; it reads TDFV.

Belongs to the EF-Ts family.

It is found in the cytoplasm. Its function is as follows. Associates with the EF-Tu.GDP complex and induces the exchange of GDP to GTP. It remains bound to the aminoacyl-tRNA.EF-Tu.GTP complex up to the GTP hydrolysis stage on the ribosome. This is Elongation factor Ts from Synechococcus elongatus (strain ATCC 33912 / PCC 7942 / FACHB-805) (Anacystis nidulans R2).